A 540-amino-acid polypeptide reads, in one-letter code: Chaperonin GroEL (540 aa).

ATP is bound by residues 29–32, 86–90, G413, 476–478, and D492; these read TLGP, DGTTT, and NAA.

It belongs to the chaperonin (HSP60) family. Forms a cylinder of 14 subunits composed of two heptameric rings stacked back-to-back. Interacts with the co-chaperonin GroES.

Its subcellular location is the cytoplasm. It catalyses the reaction ATP + H2O + a folded polypeptide = ADP + phosphate + an unfolded polypeptide.. In terms of biological role, together with its co-chaperonin GroES, plays an essential role in assisting protein folding. The GroEL-GroES system forms a nano-cage that allows encapsulation of the non-native substrate proteins and provides a physical environment optimized to promote and accelerate protein folding. The polypeptide is Chaperonin GroEL (Tsukamurella paurometabola (Corynebacterium paurometabolum)).